We begin with the raw amino-acid sequence, 572 residues long: Golgi apyrase (572 aa).

At 1-470 (MVRKYGIFID…KHWMRLFPNK (470 aa)) the chain is on the lumenal side. Residue Glu145 is the Proton acceptor of the active site. The chain crosses the membrane as a helical span at residues 471–491 (LFFILSFIFCLFFLFSLVLFG). At 492-572 (YDPKRRQRFK…RERTPRSPFP (81 aa)) the chain is on the cytoplasmic side.

The protein belongs to the GDA1/CD39 NTPase family. The cofactor is Ca(2+). Mg(2+) is required as a cofactor. Requires Mn(2+) as cofactor.

It is found in the golgi apparatus. Its subcellular location is the membrane. It catalyses the reaction a ribonucleoside 5'-triphosphate + 2 H2O = a ribonucleoside 5'-phosphate + 2 phosphate + 2 H(+). The protein operates within protein modification; protein glycosylation. Functionally, catalyzes the hydrolysis of phosphoanhydride bonds of nucleoside tri- and di-phosphates. Required for Golgi glycosylation and cell wall integrity. Involved in N-mannosylation of proteins in Golgi. In Schizosaccharomyces pombe (strain 972 / ATCC 24843) (Fission yeast), this protein is Golgi apyrase.